We begin with the raw amino-acid sequence, 135 residues long: C-type lectin LmsL (135 aa).

Cystine bridges form between C3-C14, C31-C131, C38-C133, and C106-C123. The 123-residue stretch at M10–Q132 folds into the C-type lectin domain. Residues Q96, D98, E104, N119, and D120 each coordinate Ca(2+). Positions Q96–D98 match the Galactose-binding motif.

The protein belongs to the true venom lectin family. Homodimer; disulfide-linked. In terms of tissue distribution, expressed by the venom gland.

The protein localises to the secreted. Functionally, galactose-binding protein which recognizes specific carbohydrate structures and agglutinates a variety of animal cells by binding to cell-surface glycoproteins and glycolipids. Is a calcium-dependent lectin. Shows high hemagglutinating activity, that is inhibited by lactose, galactose and inositol. The chain is C-type lectin LmsL from Lachesis stenophrys (Central American bushmaster).